A 741-amino-acid polypeptide reads, in one-letter code: Prestin (741 aa).

Topologically, residues 1 to 79 (MDHVEETEIL…WLPAYRFKEY (79 aa)) are cytoplasmic. A helical membrane pass occupies residues 80 to 105 (VLGDIVSGISTGVLQLPQGLAFAMLA). The Extracellular segment spans residues 106 to 109 (AVPP). Residues 110–125 (VFGLYSSFYPVIMYCF) form a helical membrane-spanning segment. At 126–137 (FGTSRHISIGPF) the chain is on the cytoplasmic side. The helical transmembrane segment at 138–147 (AVISLMIGGV) threads the bilayer. The Extracellular portion of the chain corresponds to 148–178 (AVRLVPDDIVIPGGVNATNSTEARDALRVKV). An Involved in motor function motif is present at residues 158–168 (IPGGVNATNST). N-linked (GlcNAc...) asparagine glycosylation is found at Asn163 and Asn166. The next 2 membrane-spanning stretches (helical) occupy residues 179-208 (AMSVTLLTGIIQFCLGVCRFGFVAIYLTEP) and 209-230 (LVRGFTTAAAVHVFTSMLKYLF). Topologically, residues 231–243 (GVKTKRYSGIFSV) are extracellular. An intramembrane region (helical) is located at residues 244 to 248 (VYSTV). Residues 249-261 (AVLQNVKNLNVCS) are Extracellular-facing. A helical transmembrane segment spans residues 262–283 (LGVGLMVFGLLLGGKEFNERFK). Over 284–291 (EKLPAPIP) the chain is Cytoplasmic. A helical transmembrane segment spans residues 292-303 (LEFFAVVMGTGI). The Extracellular segment spans residues 304 to 338 (SAGFSLHESYNVDVVGTLPLGLLPPANPDTSLFHL). The helical transmembrane segment at 339–361 (VYVDAIAIAIVGFSVTISMAKTL) threads the bilayer. The Cytoplasmic portion of the chain corresponds to 362–370 (ANKHGYQVD). A helical transmembrane segment spans residues 371–388 (GNQELIALGLCNSTGSLF). The Extracellular segment spans residues 389–396 (QTFAISCS). Residues 397-406 (LSRSLVQEGT) traverse the membrane as a helical segment. Salicylate is bound at residue Ser398. The Cytoplasmic segment spans residues 407–410 (GGKT). Residues 411-429 (QLAGCLASLMILLVILATG) form a helical membrane-spanning segment. Over 430–436 (FLFESLP) the chain is Extracellular. The chain crosses the membrane as a helical span at residues 437-459 (QAVLSAIVIVNLKGMFMQFSDLP). The Cytoplasmic portion of the chain corresponds to 460-467 (FFWRTSKI). The chain crosses the membrane as a helical span at residues 468-483 (ELTIWLTTFVSSLFLG). Leu484 is a topological domain (extracellular). The chain crosses the membrane as a helical span at residues 485–498 (DYGLITAVIIALMT). The Cytoplasmic portion of the chain corresponds to 499-741 (VIYRTQSPSY…DSEPNATPEA (243 aa)). An extended region for STAS domain region spans residues 505–718 (SPSYIVLGQL…AVLGSQVREA (214 aa)). The region spanning 525–713 (AYEEVKEVPG…HSIHDAVLGS (189 aa)) is the STAS domain. The segment at 718-741 (ALAEQEATAAPPQEDSEPNATPEA) is disordered. Residues 721-730 (EQEATAAPPQ) are compositionally biased toward low complexity.

The protein belongs to the SLC26A/SulP transporter (TC 2.A.53) family. In terms of assembly, homodimer. Interacts (via STAS domain) with CALM; this interaction is calcium-dependent and the STAS domain interacts with only one lobe of CALM which is an elongated conformation.

The protein resides in the cell membrane. The catalysed reaction is 2 hydrogencarbonate(in) + chloride(out) = 2 hydrogencarbonate(out) + chloride(in). Voltage-sensitive motor protein that drives outer hair cell (OHC) electromotility (eM) and participates in sound amplification in the hearing organ. Converts changes in the transmembrane electric potential into mechanical displacements resulting in the coupling of its expansion to movement of a charged voltage sensor across the lipid membrane. The nature of the voltage sensor is not completely clear, and two models compete. In the first model, acts as an incomplete transporter where intracellular chloride anion acts as extrinsic voltage sensor that drives conformational change in the protein which is sufficient to produce a length change in the plane of the membrane and hence in the length of the OHC. The second model in which multiple charged amino acid residues are distributed at the intracellular and extracellular membrane interfaces that form an intrinsic voltage sensor, whose movement produces the non-linear capacitance (NLC). However, the effective voltage sensor may be the result of a hybrid voltage sensor assembled from intrinsic charge (charged residues) and extrinsic charge (bound anion). Notably, binding of anions to the anion-binding pocket partially neutralizes the intrinsic positive charge rather than to form an electrically negative sensor, therefore remaining charge may serve as voltage sensor that, after depolarization, moves from down (expanded state) to up (contracted) conformation, which is accompanied by an eccentric contraction of the intermembrane cross-sectional area of the protein as well as a major increase in the hydrophobic thickness of the protein having as consequences the plasma membrane thickening and the cell contraction after membrane depolarization. The anion-binding pocket transits from the inward-open (Down) state, where it is exposed toward the intracellular solvent in the absence of anion, to the occluded (Up) state upon anion binding. Salicylate competes for the anion-binding site and inhibits the voltage-sensor movement, and therefore inhibits the charge transfer and electromotility by displacing Cl(-) from the anion-binding site and by preventing the structural transitions to the contracted state. In addition, can act as a weak Cl(-)/HCO3 (-) antiporter across the cell membrane and so regulate the intracellular pH of the outer hair cells (OHCs), while firstly found as being unable to mediate electrogenic anion transport. Moreover, supports a role in cardiac mechanical amplification serving as an elastic element to enhance the actomyosin- based sarcomere contraction system. This is Prestin from Tursiops truncatus (Atlantic bottle-nosed dolphin).